Consider the following 283-residue polypeptide: RNase adapter protein RapZ (283 aa).

8–15 (GRSGSGKS) lines the ATP pocket. 56 to 59 (DVRN) contributes to the GTP binding site. The segment at 266–283 (RARGKNVQSRHRTLEKRK) is RNA-binding.

The protein belongs to the RapZ-like family. RapZ subfamily. Homotrimer.

Functionally, modulates the synthesis of GlmS, by affecting the processing and stability of the regulatory small RNA GlmZ. When glucosamine-6-phosphate (GlcN6P) concentrations are high in the cell, RapZ binds GlmZ and targets it to cleavage by RNase E. Consequently, GlmZ is inactivated and unable to activate GlmS synthesis. Under low GlcN6P concentrations, RapZ is sequestered and inactivated by an other regulatory small RNA, GlmY, preventing GlmZ degradation and leading to synthesis of GlmS. The protein is RNase adapter protein RapZ of Yersinia enterocolitica serotype O:8 / biotype 1B (strain NCTC 13174 / 8081).